The sequence spans 524 residues: Serine/threonine-protein kinase PAK 2 (524 aa).

The tract at residues 1 to 81 (MSDNGELEDK…PEISPPSDFE (81 aa)) is disordered. N-acetylserine is present on Ser2. A phosphoserine mark is found at Ser2, Ser20, Ser55, and Ser58. A Phosphothreonine modification is found at Thr60. The residue at position 62 (Lys62) is an N6-acetyllysine. Ser64 is modified (phosphoserine). Basic and acidic residues predominate over residues 67 to 81 (KEKERPEISPPSDFE). The tract at residues 69 to 112 (KERPEISPPSDFEHTIHVGFDAVTGEFTGMPEQWARLLQTSNIT) is GTPase-binding. The tract at residues 69 to 137 (KERPEISPPS…KFYDSNTVKQ (69 aa)) is autoregulatory region. In terms of domain architecture, CRIB spans 74–87 (ISPPSDFEHTIHVG). The tract at residues 88-248 (FDAVTGEFTG…IVSIGDPKKK (161 aa)) is linker. Position 128 is an N6-acetyllysine (Lys128). The residue at position 134 (Thr134) is a Phosphothreonine. Residue Tyr139 is modified to Phosphotyrosine. Ser141 carries the phosphoserine modification. The residue at position 143 (Thr143) is a Phosphothreonine. Phosphoserine is present on Ser152. Phosphothreonine is present on residues Thr159 and Thr169. A compositionally biased stretch (acidic residues) spans 169–178 (TEEDDDDEEA). The disordered stretch occupies residues 169-188 (TEEDDDDEEAAPPVIAPRPD). Phosphoserine is present on Ser197. The disordered stretch occupies residues 204–228 (APVGDSHVDSGAKSSDKQKKKTKMT). The segment covering 209-228 (SHVDSGAKSSDKQKKKTKMT) has biased composition (basic and acidic residues). The short motif at 245–251 (PKKKYTR) is the Nuclear localization signal element. In terms of domain architecture, Protein kinase spans 249-500 (YTRYEKIGQG…AKELLQHPFL (252 aa)). Residues 255-263 (IGQGASGTV) and Lys278 each bind ATP. The active-site Proton acceptor is the Asp368. Thr402 is subject to Phosphothreonine; by autocatalysis.

As to quaternary structure, interacts tightly with GTP-bound but not GDP-bound CDC42/p21 and RAC1. Interacts with SH3MD4. Interacts with SCRIB. Interacts with ARHGEF7 and GIT1. PAK-2p34 interacts with ARHGAP10. Interacts with RAC1. In terms of processing, full-length PAK2 is autophosphorylated when activated by CDC42/p21. Following cleavage, both peptides, PAK-2p27 and PAK-2p34, become highly autophosphorylated. Autophosphorylation of PAK-2p27 can occur in the absence of any effectors and is dependent on phosphorylation of Thr-402, because PAK-2p27 is acting as an exogenous substrate. During apoptosis proteolytically cleaved by caspase-3 or caspase-3-like proteases to yield active PAK-2p34. Post-translationally, ubiquitinated, leading to its proteasomal degradation.

The protein localises to the cytoplasm. The protein resides in the nucleus. It localises to the perinuclear region. Its subcellular location is the membrane. It catalyses the reaction L-seryl-[protein] + ATP = O-phospho-L-seryl-[protein] + ADP + H(+). The catalysed reaction is L-threonyl-[protein] + ATP = O-phospho-L-threonyl-[protein] + ADP + H(+). Its activity is regulated as follows. Activated by binding small G proteins. Binding of GTP-bound CDC42 or RAC1 to the autoregulatory region releases monomers from the autoinhibited dimer, enables phosphorylation of Thr-402 and allows the kinase domain to adopt an active structure. Following caspase cleavage, autophosphorylated PAK-2p34 is constitutively active. In terms of biological role, serine/threonine protein kinase that plays a role in a variety of different signaling pathways including cytoskeleton regulation, cell motility, cell cycle progression, apoptosis or proliferation. Acts as a downstream effector of the small GTPases CDC42 and RAC1. Activation by the binding of active CDC42 and RAC1 results in a conformational change and a subsequent autophosphorylation on several serine and/or threonine residues. Full-length PAK2 stimulates cell survival and cell growth. Phosphorylates MAPK4 and MAPK6 and activates the downstream target MAPKAPK5, a regulator of F-actin polymerization and cell migration. Phosphorylates JUN and plays an important role in EGF-induced cell proliferation. Phosphorylates many other substrates including histone H4 to promote assembly of H3.3 and H4 into nucleosomes, BAD, ribosomal protein S6, or MBP. Phosphorylates CASP7, thereby preventing its activity. Additionally, associates with ARHGEF7 and GIT1 to perform kinase-independent functions such as spindle orientation control during mitosis. On the other hand, apoptotic stimuli such as DNA damage lead to caspase-mediated cleavage of PAK2, generating PAK-2p34, an active p34 fragment that translocates to the nucleus and promotes cellular apoptosis involving the JNK signaling pathway. Caspase-activated PAK2 phosphorylates MKNK1 and reduces cellular translation. In Oryctolagus cuniculus (Rabbit), this protein is Serine/threonine-protein kinase PAK 2 (PAK2).